The chain runs to 173 residues: NADH-quinone oxidoreductase subunit B (173 aa).

Positions 46, 47, 112, and 142 each coordinate [4Fe-4S] cluster.

It belongs to the complex I 20 kDa subunit family. As to quaternary structure, NDH-1 is composed of 14 different subunits. Subunits NuoB, C, D, E, F, and G constitute the peripheral sector of the complex. It depends on [4Fe-4S] cluster as a cofactor.

The protein resides in the cell membrane. It catalyses the reaction a quinone + NADH + 5 H(+)(in) = a quinol + NAD(+) + 4 H(+)(out). Its function is as follows. NDH-1 shuttles electrons from NADH, via FMN and iron-sulfur (Fe-S) centers, to quinones in the respiratory chain. The immediate electron acceptor for the enzyme in this species is believed to be a menaquinone. Couples the redox reaction to proton translocation (for every two electrons transferred, four hydrogen ions are translocated across the cytoplasmic membrane), and thus conserves the redox energy in a proton gradient. This chain is NADH-quinone oxidoreductase subunit B, found in Desulfitobacterium hafniense (strain DSM 10664 / DCB-2).